A 593-amino-acid polypeptide reads, in one-letter code: Methionine--tRNA ligase, mitochondrial (593 aa).

A mitochondrion-targeting transit peptide spans 1 to 29 (MLRVSAFRLLGRRGASRVSLLEDFSFRYY). Positions 52–62 (FYVNAAPHIGH) match the 'HIGH' region motif. Positions 347 to 351 (KMSKS) match the 'KMSKS' region motif. Residue Lys-350 participates in ATP binding.

Belongs to the class-I aminoacyl-tRNA synthetase family.

The protein localises to the mitochondrion matrix. It carries out the reaction tRNA(Met) + L-methionine + ATP = L-methionyl-tRNA(Met) + AMP + diphosphate. This Bos taurus (Bovine) protein is Methionine--tRNA ligase, mitochondrial (MARS2).